Here is a 307-residue protein sequence, read N- to C-terminus: Dioxygenase swnH1 (307 aa).

The Fe cation site is built by histidine 149, aspartate 151, and histidine 227.

It belongs to the PhyH family. As to quaternary structure, homodimer. Requires Fe cation as cofactor.

It functions in the pathway mycotoxin biosynthesis. Dioxygenase; part of the gene cluster that mediates the biosynthesis of swainsonine (SW), a cytotoxic fungal alkaloid and a potential cancer therapy drug. Swainsonine production occurs via a multibranched pathway and is dispensable for fungal colonization of plants and infection of insect hosts. The first step of swainsonine biosynthesis is the production of the precursor pipecolic acid (PA) via conversion of L-lysine (Lys) to 1-piperideine-6-carboxylate (P6C) by the aminotransferase swnA, the latter being further reduced to PA by the reductase swnR. PA can be converted from lysine by both the SW biosynthetic cluster and the unclustered genes such as lysine cyclodeaminase. The PKS-NRPS hybrid synthetase swnK uptakes and condensates PA and malonyl-CoA with and without skipping of the ketoreductase (KR) domain in order to produce 3 intermediates, 1-oxoindolizidine, (1S)-1-hydroxyindolizin, and (1R)-1-hydroxyindolizine; with the transisomer (1S)-1-hydroxyindolizin being predominant. The terminal thioester reductase (TE) domain of swnK is involved in reduction of the thioester bond to release the intermediate aldehydes. The oxidoreductase swnN could contribute to the reduction of 1-oxoindolizidine to (1S)-1-hydroxyindolizin and (1R)-1-hydroxyindolizine, contributing to the major route of SW production. The dioxygenase swnH2 would be responsible for the oxidization of (1R)-1-hydroxyindolizine into (1R,2S)-1,2-dihydroxyindolizine and of (1S)-1-hydroxyindolizin to yield both (1R,2S)-1,2-dihydroxyindolizine and (1S,2S)-1,2-dihydroxyindolizine. The dioxygenase swnH1 then performs the conversion of the 1,2-dihydroxyindolizine epimers to SW. This chain is Dioxygenase swnH1, found in Metarhizium robertsii (strain ARSEF 23 / ATCC MYA-3075) (Metarhizium anisopliae (strain ARSEF 23)).